We begin with the raw amino-acid sequence, 152 residues long: Large ribosomal subunit protein uL22 (152 aa).

Belongs to the universal ribosomal protein uL22 family. As to quaternary structure, part of the 50S ribosomal subunit.

In terms of biological role, this protein binds specifically to 23S rRNA. It makes multiple contacts with different domains of the 23S rRNA in the assembled 50S subunit and ribosome. Functionally, the globular domain of the protein is located near the polypeptide exit tunnel on the outside of the subunit, while an extended beta-hairpin is found that lines the wall of the exit tunnel in the center of the 70S ribosome. The polypeptide is Large ribosomal subunit protein uL22 (Nitrosopumilus maritimus (strain SCM1)).